The chain runs to 960 residues: Probable RNA-binding protein 19 (960 aa).

Residues 2–79 form the RRM 1 domain; sequence SRLIVKNLPN…SRITVEFCKS (78 aa). Disordered regions lie at residues 85-119 and 149-294; these read KPRA…KKKK and WAND…TTCH. 3 positions are modified to phosphoserine: Ser174, Ser176, and Ser180. A compositionally biased stretch (acidic residues) spans 176-194; that stretch reads SGQESEEEGAGEDLEEEAS. Positions 273–286 are enriched in basic and acidic residues; sequence RPPEARAETEKPAN. 2 consecutive RRM domains span residues 294–369 and 402–480; these read HTVK…REKN and GRLF…PSTI. Residue Lys481 forms a Glycyl lysine isopeptide (Lys-Gly) (interchain with G-Cter in SUMO2) linkage. Positions 491-513 are disordered; sequence LGSSSYKKKKEAQDKANSASSHN. The RRM 4 domain maps to 587–659; that stretch reads TVILVKNLPA…VPLYLEWAPV (73 aa). A disordered region spans residues 667–729; that stretch reads PQKKKLQDTP…EEEEEESLPG (63 aa). Acidic residues-rich tracts occupy residues 689-706 and 714-726; these read TVPD…EEGA and EEEE…EEES. RRM domains lie at 730–811 and 832–912; these read CTLF…ISER and SKIL…WADS. 3 positions are modified to phosphoserine: Ser936, Ser949, and Ser951.

It belongs to the RRM MRD1 family. In terms of tissue distribution, expressed in the crypts of Lieberkuhn of the intestine and in intestinal neoplasia (at protein level).

It localises to the nucleus. It is found in the nucleolus. The protein resides in the nucleoplasm. Its subcellular location is the cytoplasm. The protein localises to the chromosome. Plays a role in embryo pre-implantation development. The chain is Probable RNA-binding protein 19 (RBM19) from Homo sapiens (Human).